Consider the following 348-residue polypeptide: Phenylalanine--tRNA ligase alpha subunit (348 aa).

Position 262 (Glu262) interacts with Mg(2+).

The protein belongs to the class-II aminoacyl-tRNA synthetase family. Phe-tRNA synthetase alpha subunit type 1 subfamily. In terms of assembly, tetramer of two alpha and two beta subunits. Mg(2+) is required as a cofactor.

It is found in the cytoplasm. It catalyses the reaction tRNA(Phe) + L-phenylalanine + ATP = L-phenylalanyl-tRNA(Phe) + AMP + diphosphate + H(+). The polypeptide is Phenylalanine--tRNA ligase alpha subunit (Streptococcus pneumoniae (strain 70585)).